The primary structure comprises 465 residues: Deoxyguanosinetriphosphate triphosphohydrolase-like protein (465 aa).

The interval 1–22 (MKWDKLLNDKRRRESGVTRSKN) is disordered. The HD domain maps to 63-252 (RLTHSMEVST…LEVADDIAYL (190 aa)).

The protein belongs to the dGTPase family. Type 3 subfamily.

This is Deoxyguanosinetriphosphate triphosphohydrolase-like protein from Listeria innocua serovar 6a (strain ATCC BAA-680 / CLIP 11262).